Reading from the N-terminus, the 150-residue chain is Ribonuclease K6 (150 aa).

The first 23 residues, 1-23, serve as a signal peptide directing secretion; sequence MVLCFPLLLLLLVLWGPVCPLHA. Catalysis depends on His38, which acts as the Proton acceptor. Intrachain disulfides connect Cys46–Cys104, Cys60–Cys114, Cys78–Cys129, and Cys85–Cys92. N-linked (GlcNAc...) asparagine glycosylation occurs at Asn55. Substrate is bound by residues 61 to 65 and Lys86; that span reads KHQNT. Asn100 carries N-linked (GlcNAc...) asparagine glycosylation. Arg105 serves as a coordination point for substrate. His145 serves as the catalytic Proton donor.

The protein belongs to the pancreatic ribonuclease family. As to quaternary structure, interacts (via N-terminus) with bacterial lipopolysaccharide (LPS).

Its subcellular location is the secreted. It is found in the lysosome. The protein localises to the cytoplasmic granule. Functionally, ribonuclease which shows a preference for the pyrimidines uridine and cytosine. Has potent antibacterial activity against a range of Gram-positive and Gram-negative bacteria, including P.aeruginosa, A.baumanii, M.luteus, S.aureus, E.faecalis, E.faecium, S.saprophyticus and E.coli. Causes loss of bacterial membrane integrity, and also promotes agglutination of Gram-negative bacteria. Probably contributes to urinary tract sterility. Bactericidal activity is independent of RNase activity. This chain is Ribonuclease K6 (RNASE6), found in Gorilla gorilla gorilla (Western lowland gorilla).